The sequence spans 255 residues: MTLTIKEVTQLINAVNTIEELENHECFLDERKGVQNAIARRRKALEKEQALKEKYVEMTYFENEILKEHPNAIICGIDEVGRGPLAGPVVACATILNSNHNYLGLDDSKKVPVTKRLELNEALKNEVTAFAYGIATAEEIDEFNIYKATQIAMQRAIDGLSVQPTHLLIDAMTLDNALPQVSLIKGDARSVSIAAASIMAKVFRDDYMTQLSKDYPEYGFEKNAGYGTKQHLLAIDDIGIMKEHRKSFEPIKSLL.

The RNase H type-2 domain maps to 72–255 (AIICGIDEVG…KSFEPIKSLL (184 aa)). Positions 78, 79, and 170 each coordinate a divalent metal cation.

It belongs to the RNase HII family. Mn(2+) is required as a cofactor. Mg(2+) serves as cofactor.

The protein localises to the cytoplasm. The enzyme catalyses Endonucleolytic cleavage to 5'-phosphomonoester.. Functionally, endonuclease that specifically degrades the RNA of RNA-DNA hybrids. This is Ribonuclease HII from Staphylococcus aureus (strain USA300).